We begin with the raw amino-acid sequence, 262 residues long: Ubiquitin thioesterase otubain-like (262 aa).

Positions 64 to 262 (KFIRRTRPDG…PGHYDILYPN (199 aa)) constitute an OTU domain. The active site involves aspartate 72. Cysteine 75 functions as the Nucleophile in the catalytic mechanism. Isoleucine 168 contacts substrate. Residue histidine 255 is part of the active site.

This sequence belongs to the peptidase C65 family.

The catalysed reaction is Thiol-dependent hydrolysis of ester, thioester, amide, peptide and isopeptide bonds formed by the C-terminal Gly of ubiquitin (a 76-residue protein attached to proteins as an intracellular targeting signal).. Its function is as follows. Possible hydrolase that can remove conjugated ubiquitin from proteins in vitro and may therefore play an important regulatory role at the level of protein turnover by preventing degradation. The protein is Ubiquitin thioesterase otubain-like of Drosophila melanogaster (Fruit fly).